The primary structure comprises 336 residues: Dihydroorotate dehydrogenase (quinone) (336 aa).

FMN contacts are provided by residues 62 to 66 and Thr86; that span reads AGLDK. Lys66 is a binding site for substrate. Substrate is bound at residue 111–115; it reads NRMGF. 2 residues coordinate FMN: Asn139 and Asn172. Residue Asn172 participates in substrate binding. Ser175 (nucleophile) is an active-site residue. Asn177 lines the substrate pocket. 2 residues coordinate FMN: Lys217 and Thr245. Substrate is bound at residue 246–247; that stretch reads NT. FMN contacts are provided by residues Gly268, Gly297, and 318–319; that span reads YS.

This sequence belongs to the dihydroorotate dehydrogenase family. Type 2 subfamily. Monomer. The cofactor is FMN.

The protein localises to the cell membrane. The enzyme catalyses (S)-dihydroorotate + a quinone = orotate + a quinol. It functions in the pathway pyrimidine metabolism; UMP biosynthesis via de novo pathway; orotate from (S)-dihydroorotate (quinone route): step 1/1. Catalyzes the conversion of dihydroorotate to orotate with quinone as electron acceptor. The polypeptide is Dihydroorotate dehydrogenase (quinone) (Escherichia coli (strain UTI89 / UPEC)).